A 267-amino-acid polypeptide reads, in one-letter code: Hydroxyethylthiazole kinase (267 aa).

Residue methionine 48 coordinates substrate. Residues arginine 124 and serine 170 each coordinate ATP. Glycine 197 is a substrate binding site.

It belongs to the Thz kinase family. It depends on Mg(2+) as a cofactor.

The catalysed reaction is 5-(2-hydroxyethyl)-4-methylthiazole + ATP = 4-methyl-5-(2-phosphooxyethyl)-thiazole + ADP + H(+). The protein operates within cofactor biosynthesis; thiamine diphosphate biosynthesis; 4-methyl-5-(2-phosphoethyl)-thiazole from 5-(2-hydroxyethyl)-4-methylthiazole: step 1/1. Its function is as follows. Catalyzes the phosphorylation of the hydroxyl group of 4-methyl-5-beta-hydroxyethylthiazole (THZ). The sequence is that of Hydroxyethylthiazole kinase from Leptospira biflexa serovar Patoc (strain Patoc 1 / Ames).